A 440-amino-acid polypeptide reads, in one-letter code: Dynein axonemal assembly factor 11 (440 aa).

LRR repeat units lie at residues 20–43, 44–65, 66–89, and 90–110; these read IFSL…HKWC, RDLK…VGRL, KKLE…GCES, and LQKL…ETLK. Positions 128-146 constitute an LRRCT domain; it reads YQGYRQYVVATVPQLQSLD. Residues 178–192 show a composition bias toward basic and acidic residues; the sequence is EEREKQKSNANEHPE. 2 disordered regions span residues 178–267 and 363–440; these read EERE…RTLI and PKKR…PPLM. A compositionally biased stretch (polar residues) spans 193-211; the sequence is INQSLSESQNGTQQYPESS. The segment covering 236–259 has biased composition (basic and acidic residues); sequence SRLEAHRHLEEKRRANEKEKEKPK. The 99-residue stretch at 276-374 folds into the CS domain; that stretch reads VNEPKLDFSL…KRTIRPTSVT (99 aa). Positions 369–378 are enriched in polar residues; it reads RPTSVTSNQN. Basic and acidic residues-rich tracts occupy residues 379 to 392 and 420 to 431; these read NKKD…RELL and GLEERPVSKDFV.

This sequence belongs to the tilB family. In terms of assembly, interacts with dvl2. Interacts with kur. As to expression, expressed in kinocilia of hair cells.

The protein localises to the cytoplasm. The protein resides in the dynein axonemal particle. It is found in the cell projection. It localises to the cilium. In terms of biological role, plays a crucial role in regulating cilia motility in pronephric tubules, cloaca and neural tube. Required for establishing left-right asymmetry of the body plan; controls cell fate and convergent extension (CE) movements during gastrulation, respectively, via the Wnt and the planar cell polarity (PCP) signaling pathways. Required for the proper development of renal glomeruli and tubules. The chain is Dynein axonemal assembly factor 11 (dnaaf11) from Danio rerio (Zebrafish).